Consider the following 142-residue polypeptide: Large ribosomal subunit protein uL11 (142 aa).

Belongs to the universal ribosomal protein uL11 family. As to quaternary structure, part of the ribosomal stalk of the 50S ribosomal subunit. Interacts with L10 and the large rRNA to form the base of the stalk. L10 forms an elongated spine to which L12 dimers bind in a sequential fashion forming a multimeric L10(L12)X complex. In terms of processing, one or more lysine residues are methylated.

In terms of biological role, forms part of the ribosomal stalk which helps the ribosome interact with GTP-bound translation factors. The chain is Large ribosomal subunit protein uL11 from Maricaulis maris (strain MCS10) (Caulobacter maris).